A 368-amino-acid chain; its full sequence is L-lactate oxidase (368 aa).

Residues 13–368 (VNAIDVLDLA…KQMKVKTTFA (356 aa)) enclose the FMN hydroxy acid dehydrogenase domain. Position 39 (tyrosine 39) interacts with pyruvate. FMN is bound by residues 92–94 (PIA), serine 121, and glutamine 143. Tyrosine 145 contributes to the pyruvate binding site. Position 171 (threonine 171) interacts with FMN. Position 180 (arginine 180) interacts with pyruvate. FMN contacts are provided by lysine 239 and serine 261. Pyruvate contacts are provided by histidine 263 and arginine 266. The Proton acceptor role is filled by histidine 263. Residues 294-298 (DGGVQ) and arginine 318 each bind FMN.

Belongs to the FMN-dependent alpha-hydroxy acid dehydrogenase family. As to quaternary structure, homotetramer. Requires FMN as cofactor.

The catalysed reaction is (S)-lactate + O2 = pyruvate + H2O2. It catalyses the reaction 2-hydroxyoctanoate + O2 = 2-oxooctanoate + H2O2. Functionally, catalyzes the oxidation of (S)-lactate (L-lactate) to pyruvate, with a reduction of O2 to H2O2. To a lesser extent is also able to use 2-hydroxyoctanoate as substrate. May be involved in the utilization of L-lactate as an energy source for growth. This Lacticaseibacillus rhamnosus (strain LMS2-1) protein is L-lactate oxidase.